We begin with the raw amino-acid sequence, 119 residues long: Large ribosomal subunit protein bL17 (119 aa).

The protein belongs to the bacterial ribosomal protein bL17 family. In terms of assembly, part of the 50S ribosomal subunit. Contacts protein L32.

This Ureaplasma parvum serovar 3 (strain ATCC 27815 / 27 / NCTC 11736) protein is Large ribosomal subunit protein bL17.